Reading from the N-terminus, the 295-residue chain is Glycine--tRNA ligase alpha subunit (295 aa).

This sequence belongs to the class-II aminoacyl-tRNA synthetase family. Tetramer of two alpha and two beta subunits.

The protein localises to the cytoplasm. The enzyme catalyses tRNA(Gly) + glycine + ATP = glycyl-tRNA(Gly) + AMP + diphosphate. This chain is Glycine--tRNA ligase alpha subunit, found in Prochlorococcus marinus (strain MIT 9215).